Here is a 61-residue protein sequence, read N- to C-terminus: UPF0434 protein Pput_3813 (61 aa).

Belongs to the UPF0434 family.

This chain is UPF0434 protein Pput_3813, found in Pseudomonas putida (strain ATCC 700007 / DSM 6899 / JCM 31910 / BCRC 17059 / LMG 24140 / F1).